The sequence spans 576 residues: Arginine--tRNA ligase (576 aa).

Positions 132–142 (ANPTGPMHIGH) match the 'HIGH' region motif.

This sequence belongs to the class-I aminoacyl-tRNA synthetase family. As to quaternary structure, monomer.

The protein resides in the cytoplasm. It carries out the reaction tRNA(Arg) + L-arginine + ATP = L-arginyl-tRNA(Arg) + AMP + diphosphate. This chain is Arginine--tRNA ligase, found in Ehrlichia ruminantium (strain Gardel).